Reading from the N-terminus, the 454-residue chain is Asparagine--tRNA ligase (454 aa).

The protein belongs to the class-II aminoacyl-tRNA synthetase family. In terms of assembly, homodimer.

It localises to the cytoplasm. The catalysed reaction is tRNA(Asn) + L-asparagine + ATP = L-asparaginyl-tRNA(Asn) + AMP + diphosphate + H(+). The protein is Asparagine--tRNA ligase of Mycoplasma capricolum subsp. capricolum (strain California kid / ATCC 27343 / NCTC 10154).